The following is a 127-amino-acid chain: Major sperm protein 78 (127 aa).

N-acetylalanine is present on Ala2. The MSP domain occupies 9-126 (DIQTQPGTKI…RRKNLPIEYN (118 aa)).

In terms of tissue distribution, sperm.

It is found in the cell projection. The protein localises to the pseudopodium. Its subcellular location is the cytoplasm. The protein resides in the cytoskeleton. Its function is as follows. Central component in molecular interactions underlying sperm crawling. Forms an extensive filament system that extends from sperm villipoda, along the leading edge of the pseudopod. This is Major sperm protein 78 (msp-78) from Caenorhabditis elegans.